We begin with the raw amino-acid sequence, 452 residues long: MARRYFGTDGIRGKVGEGPITPEFVLRLGYAAGKVLAGADRWAKSGTRPTVLIGKDTRVSGYMLEAALESGFSAAGVDVMLAGPMPTPGIAYLTRALRLAAGVVISASHNPYYDNGIKFFSADGNKLPDEVESQIEEQLDLPLACAASEQLGKARRLDDAAGRYIEFCKSTFPAAFDLHGLKLVVDCAHGAAYDVAPHVFHELGAEVIPIGVAPNGFNINDGVGATAPDALVRAVRANHADLGIALDGDADRLQVVDAAGRLYNGDELLYILVKDRVATDGKVDGAVGTLMTNMAVEVALQEAGVKFVRAAVGDRYVLEQLREHGWQLGAEGSGHILSLDRHSTGDGIVSALLVLAAMKRSEKTLADLLDGVTLFPQKLINVRMKPDADWKSSDAIRRAIAKAESALNGRGRVLIRASGTEPVLRVMVEAENAADALQYAESIAGAVKEATA.

Serine 108 functions as the Phosphoserine intermediate in the catalytic mechanism. Mg(2+) is bound by residues serine 108, aspartate 247, aspartate 249, and aspartate 251. Phosphoserine is present on serine 108.

This sequence belongs to the phosphohexose mutase family. It depends on Mg(2+) as a cofactor. Activated by phosphorylation.

The catalysed reaction is alpha-D-glucosamine 1-phosphate = D-glucosamine 6-phosphate. In terms of biological role, catalyzes the conversion of glucosamine-6-phosphate to glucosamine-1-phosphate. The chain is Phosphoglucosamine mutase from Paraburkholderia phytofirmans (strain DSM 17436 / LMG 22146 / PsJN) (Burkholderia phytofirmans).